The primary structure comprises 93 residues: Cobalt transport protein CbiN (93 aa).

The next 2 membrane-spanning stretches (helical) occupy residues 5-25 and 63-83; these read LMLL…NHGG and LLFT…LGYC.

The protein belongs to the CbiN family. In terms of assembly, forms an energy-coupling factor (ECF) transporter complex composed of an ATP-binding protein (A component, CbiO), a transmembrane protein (T component, CbiQ) and 2 possible substrate-capture proteins (S components, CbiM and CbiN) of unknown stoichimetry.

It is found in the cell inner membrane. It functions in the pathway cofactor biosynthesis; adenosylcobalamin biosynthesis. Functionally, part of the energy-coupling factor (ECF) transporter complex CbiMNOQ involved in cobalt import. The sequence is that of Cobalt transport protein CbiN from Salmonella arizonae (strain ATCC BAA-731 / CDC346-86 / RSK2980).